The sequence spans 298 residues: GPN-loop GTPase QQT1 (298 aa).

Position 12–17 (12–17 (GSGKTT)) interacts with GTP. A Gly-Pro-Asn (GPN)-loop; involved in dimer interface motif is present at residues 69–71 (GPN). A GTP-binding site is contributed by 173–176 (SKID).

It belongs to the GPN-loop GTPase family. As to quaternary structure, heterodimer with QQT2. In terms of tissue distribution, expressed in vascular tissues, root tips, apical and root meristematic regions, and floral primordia.

Its subcellular location is the cytoplasm. The protein resides in the nucleus. It localises to the cytoskeleton. It is found in the spindle. The protein localises to the phragmoplast. In terms of biological role, small GTPase that is essential for the correct formation of the tangential divisions in early embryos. Associates with microtubule during mitosis and may function in the positioning of the division plane. May participate in the patterning of the early embryo at the octant-dermatogen transition. Is crucial for normal development of the plant. The sequence is that of GPN-loop GTPase QQT1 from Arabidopsis thaliana (Mouse-ear cress).